The following is a 504-amino-acid chain: 26S proteasome non-ATPase regulatory subunit 3 (504 aa).

A PCI domain is found at 254 to 433 (ARYMYYQGRI…RDGPRYMQSS (180 aa)).

It belongs to the proteasome subunit S3 family. As to quaternary structure, the 26S proteasome is composed of a core protease, known as the 20S proteasome, capped at one or both ends by the 19S regulatory complex (RC). The RC is composed of at least 18 different subunits in two subcomplexes, the base and the lid, which form the portions proximal and distal to the 20S proteolytic core, respectively.

Its function is as follows. Acts as a regulatory subunit of the 26 proteasome which is involved in the ATP-dependent degradation of ubiquitinated proteins. This chain is 26S proteasome non-ATPase regulatory subunit 3 (rpn-3), found in Caenorhabditis elegans.